A 319-amino-acid chain; its full sequence is Acetyl-coenzyme A carboxylase carboxyl transferase subunit alpha (319 aa).

The CoA carboxyltransferase C-terminal domain occupies 35–296; that stretch reads DLDKEIEQLE…KANLLRQLED (262 aa).

It belongs to the AccA family. In terms of assembly, acetyl-CoA carboxylase is a heterohexamer composed of biotin carboxyl carrier protein (AccB), biotin carboxylase (AccC) and two subunits each of ACCase subunit alpha (AccA) and ACCase subunit beta (AccD).

Its subcellular location is the cytoplasm. It catalyses the reaction N(6)-carboxybiotinyl-L-lysyl-[protein] + acetyl-CoA = N(6)-biotinyl-L-lysyl-[protein] + malonyl-CoA. It functions in the pathway lipid metabolism; malonyl-CoA biosynthesis; malonyl-CoA from acetyl-CoA: step 1/1. Functionally, component of the acetyl coenzyme A carboxylase (ACC) complex. First, biotin carboxylase catalyzes the carboxylation of biotin on its carrier protein (BCCP) and then the CO(2) group is transferred by the carboxyltransferase to acetyl-CoA to form malonyl-CoA. The sequence is that of Acetyl-coenzyme A carboxylase carboxyl transferase subunit alpha from Vibrio campbellii (strain ATCC BAA-1116).